Consider the following 94-residue polypeptide: Large ribosomal subunit protein eL36 (94 aa).

The segment covering 1-25 has biased composition (basic residues); the sequence is MKNAYKKVRVRYPVKRPDVKRKQRG. The interval 1–30 is disordered; sequence MKNAYKKVRVRYPVKRPDVKRKQRGPRAET.

The protein belongs to the eukaryotic ribosomal protein eL36 family. In terms of assembly, component of the large ribosomal subunit.

It localises to the cytoplasm. The sequence is that of Large ribosomal subunit protein eL36 (RPL36) from Encephalitozoon cuniculi (strain GB-M1) (Microsporidian parasite).